A 225-amino-acid polypeptide reads, in one-letter code: Riboflavin kinase (225 aa).

The tract at residues 1–89 (MPDIKYLKKL…SRIFSPDLDI (89 aa)) is unknown. Positions 90–225 (LELEGKVLKG…LKKQGTENQK (136 aa)) are riboflavin kinase. 99 to 104 (GLGEGQ) is a CDP binding site. Residues threonine 128 and asparagine 130 each contribute to the Mg(2+) site. 2 residues coordinate FMN: threonine 185 and glutamate 193. 198-201 (IKLR) contributes to the CDP binding site.

Belongs to the archaeal riboflavin kinase family. Requires Mg(2+) as cofactor.

The enzyme catalyses riboflavin + CTP = CDP + FMN + H(+). The protein operates within cofactor biosynthesis; FMN biosynthesis; FMN from riboflavin (CTP route): step 1/1. Functionally, catalyzes the CTP-dependent phosphorylation of riboflavin (vitamin B2) to form flavin mononucleotide (FMN). This Methanosarcina barkeri (strain Fusaro / DSM 804) protein is Riboflavin kinase (ribK).